The sequence spans 333 residues: Putative ketol-acid reductoisomerase 2 (333 aa).

A KARI N-terminal Rossmann domain is found at 1–182 (MDKTVLDANL…AIPGGIAVIS (182 aa)). In terms of domain architecture, KARI C-terminal knotted spans 183 to 329 (SFEEEALLDL…KELYKLLGRK (147 aa)).

This sequence belongs to the ketol-acid reductoisomerase family.

The enzyme catalyses (2R)-2,3-dihydroxy-3-methylbutanoate + NADP(+) = (2S)-2-acetolactate + NADPH + H(+). It carries out the reaction (2R,3R)-2,3-dihydroxy-3-methylpentanoate + NADP(+) = (S)-2-ethyl-2-hydroxy-3-oxobutanoate + NADPH + H(+). The protein operates within amino-acid biosynthesis; L-isoleucine biosynthesis; L-isoleucine from 2-oxobutanoate: step 2/4. It participates in amino-acid biosynthesis; L-valine biosynthesis; L-valine from pyruvate: step 2/4. In Saccharolobus solfataricus (strain ATCC 35092 / DSM 1617 / JCM 11322 / P2) (Sulfolobus solfataricus), this protein is Putative ketol-acid reductoisomerase 2 (ilvC2).